Consider the following 288-residue polypeptide: 33 kDa chaperonin (288 aa).

2 disulfide bridges follow: Cys237–Cys239 and Cys270–Cys273.

The protein belongs to the HSP33 family. Post-translationally, under oxidizing conditions two disulfide bonds are formed involving the reactive cysteines. Under reducing conditions zinc is bound to the reactive cysteines and the protein is inactive.

Its subcellular location is the cytoplasm. Redox regulated molecular chaperone. Protects both thermally unfolding and oxidatively damaged proteins from irreversible aggregation. Plays an important role in the bacterial defense system toward oxidative stress. The chain is 33 kDa chaperonin from Agathobacter rectalis (strain ATCC 33656 / DSM 3377 / JCM 17463 / KCTC 5835 / VPI 0990) (Eubacterium rectale).